A 419-amino-acid polypeptide reads, in one-letter code: Putative zinc metalloprotease M6_Spy1682 (419 aa).

Residue His-18 participates in Zn(2+) binding. Glu-19 is a catalytic residue. Position 22 (His-22) interacts with Zn(2+). 4 helical membrane-spanning segments follow: residues 169-191 (LITNFAGPMNNFILGIVVFILLV), 301-323 (LAWSGAFTILNALKGLITGFSLN), 343-365 (LESVLSLMAMLSINLGIFNLIPI), and 392-411 (AYITLAGVAIMVVLMIAVTW). The PDZ domain maps to 175-274 (GPMNNFILGI…LKTVAVKPQK (100 aa)).

Belongs to the peptidase M50B family. It depends on Zn(2+) as a cofactor.

It is found in the cell membrane. The chain is Putative zinc metalloprotease M6_Spy1682 from Streptococcus pyogenes serotype M6 (strain ATCC BAA-946 / MGAS10394).